The primary structure comprises 649 residues: MGVLARIQTPDDLRQLNSAEMKQLAAEIREFLVQKVAATGGHLGPNLGVVELTLALHRIFDSPADPIIFDTGHQAYVHKILTGRKDDFDSLRKQGGLSGYPCRAESDHDWVESSHASASLSYADGLAKAFELTGQDRHVVAVVGDGALTGGMCWEALNNIAAGKDRSVVIVVNDNGRSYAPTIGGLADHLAALRLQPGYERILDSGRRMVKKLPWVGRTAYSVLHGMKAGLKDAVAPQVMFTDLGIKYLGPVDGHDEAALESALRRAKAFGGPVIVHAVTRKGMGYAPAENHVADQMHSTGVIDPITGRGTGSASADWTSVFSAELIDQASHRQDIVAITAAMAGPTGLAAFGEKYPDRMFDVGIAEQHAVTSAAGLALGGLHPVVAVYSTFLNRAFDQLLMDVALLKLPVTLVLDRAGITGNDGASHNGMWDMSLLGIVPGMKVAAPRDTATLREELDEALAVDDGPTALRFPKGTVGDDVPAVSRLDGVVDILRAPSGRNDVLIVSVGAFAGLALAAAERLEQQGISATVVDPRWVLPVPESLVKLAEDYTMVVTVEDSGLHGGVGSTVSAALRAAGVDVPCRDLGVPQQFLDHASRAQIHAELGLTAQDVARQITGWFAGLGNLRPEQQNGVVADLDAQRAEKQQG.

Thiamine diphosphate-binding positions include histidine 73 and 114-116; that span reads SHA. Aspartate 145 is a Mg(2+) binding site. Thiamine diphosphate contacts are provided by residues 146 to 147, asparagine 175, tyrosine 286, and glutamate 367; that span reads GA. Asparagine 175 is a Mg(2+) binding site.

The protein belongs to the transketolase family. DXPS subfamily. In terms of assembly, homodimer. It depends on Mg(2+) as a cofactor. Thiamine diphosphate is required as a cofactor.

The catalysed reaction is D-glyceraldehyde 3-phosphate + pyruvate + H(+) = 1-deoxy-D-xylulose 5-phosphate + CO2. The protein operates within metabolic intermediate biosynthesis; 1-deoxy-D-xylulose 5-phosphate biosynthesis; 1-deoxy-D-xylulose 5-phosphate from D-glyceraldehyde 3-phosphate and pyruvate: step 1/1. In terms of biological role, catalyzes the acyloin condensation reaction between C atoms 2 and 3 of pyruvate and glyceraldehyde 3-phosphate to yield 1-deoxy-D-xylulose-5-phosphate (DXP). In Rhodococcus jostii (strain RHA1), this protein is 1-deoxy-D-xylulose-5-phosphate synthase.